We begin with the raw amino-acid sequence, 318 residues long: Protein-methionine-sulfoxide reductase catalytic subunit MsrP (318 aa).

Positions 1-40 (MKQLMMSDVTPEEIFNQRRQIIKSMGLGIATLGLPNIAFA) form a signal peptide, tat-type signal. Residues Asn-72, 75 to 76 (YE), Cys-130, Thr-165, Asn-217, Arg-222, and 233 to 235 (SIK) contribute to the Mo-molybdopterin site.

Belongs to the MsrP family. Heterodimer of a catalytic subunit (MsrP) and a heme-binding subunit (MsrQ). It depends on Mo-molybdopterin as a cofactor. In terms of processing, predicted to be exported by the Tat system. The position of the signal peptide cleavage has not been experimentally proven.

It is found in the periplasm. The enzyme catalyses L-methionyl-[protein] + a quinone + H2O = L-methionyl-(S)-S-oxide-[protein] + a quinol. It carries out the reaction L-methionyl-[protein] + a quinone + H2O = L-methionyl-(R)-S-oxide-[protein] + a quinol. Its function is as follows. Part of the MsrPQ system that repairs oxidized periplasmic proteins containing methionine sulfoxide residues (Met-O), using respiratory chain electrons. Thus protects these proteins from oxidative-stress damage caused by reactive species of oxygen and chlorine generated by the host defense mechanisms. MsrPQ is essential for the maintenance of envelope integrity under bleach stress, rescuing a wide series of structurally unrelated periplasmic proteins from methionine oxidation. The catalytic subunit MsrP is non-stereospecific, being able to reduce both (R-) and (S-) diastereoisomers of methionine sulfoxide. This Haemophilus ducreyi (strain 35000HP / ATCC 700724) protein is Protein-methionine-sulfoxide reductase catalytic subunit MsrP.